Reading from the N-terminus, the 150-residue chain is Protein adenylyltransferase MntA (150 aa).

The GSX(10)DXD motif signature appears at 32–46 (GSRATGNINANSDWD). Active-site residues include Asp44 and Asp46. Positions 44, 46, and 86 each coordinate Mg(2+).

This sequence belongs to the MntA antitoxin family. As to quaternary structure, forms a complex with HepT, probably MntA(1):HepT(2) in vivo; can only be purified when both 'Arg-102' and 'Tyr-109' (or 'His-107' and 'Tyr-109') of HepThave been mutated. The fully di-AMPylated HepT homodimer is not found in a complex with MntA. Mg(2+) is required as a cofactor.

It carries out the reaction L-tyrosyl-[protein] + ATP = O-(5'-adenylyl)-L-tyrosyl-[protein] + diphosphate. It catalyses the reaction O-(5'-adenylyl)-L-tyrosyl-[protein] + ATP = O-[5'-(adenylyl-(5'-&gt;3')-adenylyl)]-L-tyrosyl-[protein] + diphosphate. In terms of biological role, antitoxin component of a type VII toxin-antitoxin (TA) system. Upon cloning in E.coli neutralizes the effect of cognate toxin HepT. Neutralization is mostly due to di-AMPylation of toxin by this enzyme. Successively di-AMPylates HepT on 'Tyr-109'. In vitro will use ATP, dATP, GTP, dGTP, TTP or UTP to generate a mono-modified protein, but requires a purine nucleotide for the second modification reaction (ATP, dATP or GTP). The polypeptide is Protein adenylyltransferase MntA (Aphanizomenon flos-aquae (strain 2012/KM1/D3)).